The chain runs to 506 residues: Sugar transport protein 5 (506 aa).

Residues 1 to 19 (MAGGGLALDVSSAGNIDAK) lie on the Cytoplasmic side of the membrane. Helical transmembrane passes span 20-40 (ITAA…IFGY), 81-101 (LLTA…LVAS), 117-137 (GFTF…AMLI), 141-161 (ILLG…LSEV), 168-188 (GAFN…ANLI), 201-221 (ISLG…LFIS), 287-307 (LVVA…VNAF), 325-345 (IATF…TMVI), 352-372 (FLFI…AVLL), 390-410 (VTVV…WGPL), 430-450 (LSVA…LATL), and 456-476 (GAFL…IMFL). Over 477–506 (PETKGIPVDSMYQVWEKHWYWQRFTKPTST) the chain is Cytoplasmic.

Belongs to the major facilitator superfamily. Sugar transporter (TC 2.A.1.1) family.

The protein resides in the membrane. Functionally, mediates an active uptake of hexoses, probably by sugar/hydrogen symport. This chain is Sugar transport protein 5 (STP5), found in Arabidopsis thaliana (Mouse-ear cress).